The primary structure comprises 77 residues: Epoxide hydrolase (77 aa).

In terms of assembly, monomer.

It catalyses the reaction an epoxide + H2O = an ethanediol. In terms of biological role, this enzyme acts on aliphatic epoxides. Its substrates include epichlorohydrin, epibromohydrin, epoxyoctane and styrene epoxide. This Pseudomonas sp. (strain AD1) protein is Epoxide hydrolase.